The primary structure comprises 67 residues: SPbeta prophage-derived uncharacterized protein YopZ (67 aa).

The stretch at M1–V40 forms a coiled coil. Residues W44–W66 traverse the membrane as a helical segment.

The protein resides in the cell membrane. This Bacillus subtilis (strain 168) protein is SPbeta prophage-derived uncharacterized protein YopZ (yopZ).